We begin with the raw amino-acid sequence, 266 residues long: Apolipoprotein A-I (266 aa).

Residues 1–18 (MKAVVLTLAVLFLTGSQA) form the signal peptide. A run of 2 repeats spans residues 67 to 88 (LKLLDNWDSLTSTVTKLREQIG) and 89 to 110 (PVTQEFWDNLEKETEVLRQEMS). The segment at 67–266 (LKLLDNWDSL…DEAAKKLNAQ (200 aa)) is 10 X approximate tandem repeats. Met-109 is subject to Methionine sulfoxide. The stretch at 111 to 121 (KDLEEVKQKVQ) is one 3; half-length repeat. 5 consecutive repeat copies span residues 122–142 (PYLDEFQKNWHEEVELYRQKV), 144–165 (PLGAELREGARQKLQELQEKLS), 166–187 (PLGEELRDRARIHVDALRAQLA), 188–210 (PYSDQLRERLAARLQALKEDGGA), and 211–231 (SLAEYHAKASEHLSALSEKAK). One copy of the 9; half-length repeat lies at 232–242 (PALEDLRQGLL). Copy 10 of the repeat occupies 243–266 (PVLESFKVSLLAAVDEAAKKLNAQ).

Belongs to the apolipoprotein A1/A4/E family. As to quaternary structure, homodimer. Interacts with APOA1BP and CLU. Component of a sperm activating protein complex (SPAP), consisting of APOA1, an immunoglobulin heavy chain, an immunoglobulin light chain and albumin. Interacts with NDRG1. Interacts with SCGB3A2. Interacts with NAXE and YJEFN3. In terms of processing, glycosylated. Post-translationally, palmitoylated. Phosphorylation sites are present in the extracellular medium. In terms of tissue distribution, major protein of plasma HDL, also found in chylomicrons.

It localises to the secreted. Functionally, participates in the reverse transport of cholesterol from tissues to the liver for excretion by promoting cholesterol efflux from tissues and by acting as a cofactor for the lecithin cholesterol acyltransferase (LCAT). As part of the SPAP complex, activates spermatozoa motility. The polypeptide is Apolipoprotein A-I (APOA1) (Ailuropoda melanoleuca (Giant panda)).